Reading from the N-terminus, the 191-residue chain is Large ribosomal subunit protein bL25 (191 aa).

It belongs to the bacterial ribosomal protein bL25 family. CTC subfamily. As to quaternary structure, part of the 50S ribosomal subunit; part of the 5S rRNA/L5/L18/L25 subcomplex. Contacts the 5S rRNA. Binds to the 5S rRNA independently of L5 and L18.

Functionally, this is one of the proteins that binds to the 5S RNA in the ribosome where it forms part of the central protuberance. The polypeptide is Large ribosomal subunit protein bL25 (Nitratidesulfovibrio vulgaris (strain DSM 19637 / Miyazaki F) (Desulfovibrio vulgaris)).